We begin with the raw amino-acid sequence, 469 residues long: Putative F-box/LRR-repeat protein At5g02930 (469 aa).

In terms of domain architecture, F-box spans 27-77 (VDSISDLPDAVLQHIFSYIPTELAIRTSVLSKRWRHVWSETPHLSFEWLKV). 6 LRR repeats span residues 30–58 (ISDLPDAVLQHIFSYIPTELAIRTSVLSK), 178–203 (DCTMSDESFLEILSGCPILESLSLKF), 204–214 (CMSLKYLNLSK), 223–250 (IERISYIRAPMLSMQIVAPYIHYLRLRD), 296–321 (TMLKTFQKVEKLTLGVNLLQMLSLSK), and 341–366 (IIRSVVPGIARLLQNLPGLKKITVYT).

The protein is Putative F-box/LRR-repeat protein At5g02930 of Arabidopsis thaliana (Mouse-ear cress).